Here is a 248-residue protein sequence, read N- to C-terminus: Mannose-binding protein C (248 aa).

The signal sequence occupies residues 1-20 (MSPFLSLPLLLLSVLSASYS). Positions 36 to 112 (IACSSPGING…GDSSLAASER (77 aa)) are disordered. A Collagen-like domain is found at 42-99 (GINGFPGKDGRDGTKGEKGEPGQGLRGLQGPPGKLGPPGNPGPSGSPGAKGQKGDPGA). A 4-hydroxyproline modification is found at Pro-47. Basic and acidic residues predominate over residues 49–61 (KDGRDGTKGEKGE). Pro-73, Pro-79, Pro-82, and Pro-88 each carry 4-hydroxyproline. Residues 112 to 130 (RKALQTEMARIKKWVTFSL) are a coiled coil. In terms of domain architecture, C-type lectin spans 134–245 (VGKKLFLSNG…CSSSHLAICE (112 aa)). Cystine bridges form between Cys-155–Cys-244 and Cys-222–Cys-236.

As to quaternary structure, oligomeric complex of 3 or more homotrimers. Interacts with MASP1 and MASP2. Interacts with MEP1A and MEP1B and may inhibit their catalytic activity. Post-translationally, hydroxylation on proline residues within the sequence motif, GXPG, is most likely to be 4-hydroxy as this fits the requirement for 4-hydroxylation in vertebrates.

The protein resides in the secreted. Calcium-dependent lectin involved in innate immune defense. Binds mannose, fucose and N-acetylglucosamine on different microorganisms and activates the lectin complement pathway. Binds to late apoptotic cells, as well as to apoptotic blebs and to necrotic cells, but not to early apoptotic cells, facilitating their uptake by macrophages. This Saguinus oedipus (Cotton-top tamarin) protein is Mannose-binding protein C (MBL2).